A 233-amino-acid chain; its full sequence is ATP-dependent dethiobiotin synthetase BioD (233 aa).

Gly-12 to Ile-17 provides a ligand contact to ATP. Thr-16 provides a ligand contact to Mg(2+). Residue Lys-37 is part of the active site. Ser-41 provides a ligand contact to substrate. ATP contacts are provided by residues Asp-51, Glu-112–Gly-115, and Pro-202–Leu-204. The Mg(2+) site is built by Asp-51 and Glu-112.

This sequence belongs to the dethiobiotin synthetase family. As to quaternary structure, homodimer. Requires Mg(2+) as cofactor.

The protein localises to the cytoplasm. It catalyses the reaction (7R,8S)-7,8-diammoniononanoate + CO2 + ATP = (4R,5S)-dethiobiotin + ADP + phosphate + 3 H(+). Its pathway is cofactor biosynthesis; biotin biosynthesis; biotin from 7,8-diaminononanoate: step 1/2. Its function is as follows. Catalyzes a mechanistically unusual reaction, the ATP-dependent insertion of CO2 between the N7 and N8 nitrogen atoms of 7,8-diaminopelargonic acid (DAPA, also called 7,8-diammoniononanoate) to form a ureido ring. The polypeptide is ATP-dependent dethiobiotin synthetase BioD (Bacillus velezensis (strain DSM 23117 / BGSC 10A6 / LMG 26770 / FZB42) (Bacillus amyloliquefaciens subsp. plantarum)).